The chain runs to 118 residues: Probable dihydroneopterin aldolase (118 aa).

Residues E21, Y53, and 72–73 contribute to the substrate site; that span reads IE. The active-site Proton donor/acceptor is the K98.

Belongs to the DHNA family.

It carries out the reaction 7,8-dihydroneopterin = 6-hydroxymethyl-7,8-dihydropterin + glycolaldehyde. The protein operates within cofactor biosynthesis; tetrahydrofolate biosynthesis; 2-amino-4-hydroxy-6-hydroxymethyl-7,8-dihydropteridine diphosphate from 7,8-dihydroneopterin triphosphate: step 3/4. Catalyzes the conversion of 7,8-dihydroneopterin to 6-hydroxymethyl-7,8-dihydropterin. The sequence is that of Probable dihydroneopterin aldolase (folB) from Synechocystis sp. (strain ATCC 27184 / PCC 6803 / Kazusa).